We begin with the raw amino-acid sequence, 538 residues long: Chaperonin GroEL (538 aa).

ATP contacts are provided by residues 29 to 32 (TIGP), 86 to 90 (DGTTT), G413, 476 to 478 (NAA), and D492.

The protein belongs to the chaperonin (HSP60) family. In terms of assembly, forms a cylinder of 14 subunits composed of two heptameric rings stacked back-to-back. Interacts with the co-chaperonin GroES.

The protein localises to the cytoplasm. The catalysed reaction is ATP + H2O + a folded polypeptide = ADP + phosphate + an unfolded polypeptide.. Its function is as follows. Together with its co-chaperonin GroES, plays an essential role in assisting protein folding. The GroEL-GroES system forms a nano-cage that allows encapsulation of the non-native substrate proteins and provides a physical environment optimized to promote and accelerate protein folding. The protein is Chaperonin GroEL of Staphylococcus aureus (strain NCTC 8325 / PS 47).